The chain runs to 377 residues: SH2/SH3 adapter protein Nck1 (377 aa).

Alanine 2 is subject to N-acetylalanine. The SH3 1 domain occupies 2–61 (AEEVVVVAKFDYVAQQEQELDIKKNERLWLLDDSKSWWRVRNSMNKTGFVPSNYVERKNS). Phosphoserine occurs at positions 85, 91, and 96. Tyrosine 105 is modified (phosphotyrosine). One can recognise an SH3 2 domain in the interval 106–165 (DLNMPAFVKFNYMAEREDELSLIKGTKVIVMEKCSDGWWRGSYNGQIGWFPSNYVTEEGD). Serine 166 carries the post-translational modification Phosphoserine. One can recognise an SH3 3 domain in the interval 190-252 (QVLHVVQALY…PKNYVTIMQN (63 aa)). Residues 282–376 (WYYGKVTRHQ…GEKLYLVKHL (95 aa)) form the SH2 domain.

As to quaternary structure, interacts (via SH2 domain and SH3 domain 2) with EGFR. Interacts with PAK1 and SOS1. Interacts (via SH3 domains) with PKN2. Associates with BLNK, PLCG1, VAV1 and NCK1 in a B-cell antigen receptor-dependent fashion. Interacts with SOCS7. This interaction is required for nuclear import. Part of a complex containing PPP1R15B, PP1 and NCK1. Interacts with RALGPS1. Interacts with CAV2 (tyrosine phosphorylated form). Interacts with ADAM15. Interacts with FASLG. Directly interacts with RASA1. Interacts with isoform 4 of MINK1. Interacts with FLT1 (tyrosine phosphorylated). Interacts with KDR (tyrosine phosphorylated). Interacts (via SH2 domain) with EPHB1; activates the JUN cascade to regulate cell adhesion. Interacts with EPHA2. Interacts (via SH2 domain) with PDGFRB (tyrosine phosphorylated). Interacts with the inactive form of EIF2AK2/PKR. Interacts with PTPN1. Interacts with INSR/insulin receptor (in response to insulin stimulation); this interaction may mediate PTPN1 recruitment leading to INSR dephosphorylation. Interacts with CD3E (via Proline-rich sequence); the interaction is ligand dependent but independent of tyrosine kinase activation. Interacts with EGFR. Interacts with IRS1. In terms of processing, phosphorylated on Ser and Tyr residues. Phosphorylated in response to activation of EGFR and FcERI. Phosphorylated by activated PDGFRB.

The protein resides in the cytoplasm. It is found in the endoplasmic reticulum. It localises to the nucleus. Its function is as follows. Adapter protein which associates with tyrosine-phosphorylated growth factor receptors, such as KDR and PDGFRB, or their cellular substrates. Maintains low levels of EIF2S1 phosphorylation by promoting its dephosphorylation by PP1. Plays a role in the DNA damage response, not in the detection of the damage by ATM/ATR, but for efficient activation of downstream effectors, such as that of CHEK2. Plays a role in ELK1-dependent transcriptional activation in response to activated Ras signaling. Modulates the activation of EIF2AK2/PKR by dsRNA. May play a role in cell adhesion and migration through interaction with ephrin receptors. Also acts as an adpater protein for the T cell receptor complex (TCR-CD3E). Upon ligand engagement, is recruited by CD3E and promotes maturation of the immune synapse and T cell activation. The sequence is that of SH2/SH3 adapter protein Nck1 (Nck1) from Mus musculus (Mouse).